A 247-amino-acid polypeptide reads, in one-letter code: ATP synthase subunit a, chloroplastic (247 aa).

5 helical membrane passes run 38–58 (QVLITSWVVIAILLGSASIAV), 95–115 (VPFIGTMFLFIFVSNWSGALL), 134–154 (INTTVALALLTSVAYFYAGLT), 199–219 (LVVVVLVSLVPLVVPIPVMFL), and 220–240 (GLFTSGIQALIFATLAAAYIG).

Belongs to the ATPase A chain family. As to quaternary structure, F-type ATPases have 2 components, CF(1) - the catalytic core - and CF(0) - the membrane proton channel. CF(1) has five subunits: alpha(3), beta(3), gamma(1), delta(1), epsilon(1). CF(0) has four main subunits: a, b, b' and c.

It is found in the plastid. The protein resides in the chloroplast thylakoid membrane. In terms of biological role, key component of the proton channel; it plays a direct role in the translocation of protons across the membrane. This is ATP synthase subunit a, chloroplastic from Eucalyptus globulus subsp. globulus (Tasmanian blue gum).